Reading from the N-terminus, the 346-residue chain is Holliday junction branch migration complex subunit RuvB (346 aa).

The interval 1–183 (MTEQRIIASS…FGIVQRLEFY (183 aa)) is large ATPase domain (RuvB-L). Residues Ile-22, Arg-23, Gly-64, Lys-67, Thr-68, Thr-69, 130-132 (EDF), Arg-173, Tyr-183, and Arg-220 each bind ATP. Thr-68 is a Mg(2+) binding site. The small ATPAse domain (RuvB-S) stretch occupies residues 184-254 (SPQELTRIVS…VAQAAMQMLK (71 aa)). The segment at 257–346 (PEGFDELDRR…PGIGEPGDLF (90 aa)) is head domain (RuvB-H). Positions 293, 312, and 317 each coordinate DNA.

The protein belongs to the RuvB family. In terms of assembly, homohexamer. Forms an RuvA(8)-RuvB(12)-Holliday junction (HJ) complex. HJ DNA is sandwiched between 2 RuvA tetramers; dsDNA enters through RuvA and exits via RuvB. An RuvB hexamer assembles on each DNA strand where it exits the tetramer. Each RuvB hexamer is contacted by two RuvA subunits (via domain III) on 2 adjacent RuvB subunits; this complex drives branch migration. In the full resolvosome a probable DNA-RuvA(4)-RuvB(12)-RuvC(2) complex forms which resolves the HJ.

It is found in the cytoplasm. It carries out the reaction ATP + H2O = ADP + phosphate + H(+). Functionally, the RuvA-RuvB-RuvC complex processes Holliday junction (HJ) DNA during genetic recombination and DNA repair, while the RuvA-RuvB complex plays an important role in the rescue of blocked DNA replication forks via replication fork reversal (RFR). RuvA specifically binds to HJ cruciform DNA, conferring on it an open structure. The RuvB hexamer acts as an ATP-dependent pump, pulling dsDNA into and through the RuvAB complex. RuvB forms 2 homohexamers on either side of HJ DNA bound by 1 or 2 RuvA tetramers; 4 subunits per hexamer contact DNA at a time. Coordinated motions by a converter formed by DNA-disengaged RuvB subunits stimulates ATP hydrolysis and nucleotide exchange. Immobilization of the converter enables RuvB to convert the ATP-contained energy into a lever motion, pulling 2 nucleotides of DNA out of the RuvA tetramer per ATP hydrolyzed, thus driving DNA branch migration. The RuvB motors rotate together with the DNA substrate, which together with the progressing nucleotide cycle form the mechanistic basis for DNA recombination by continuous HJ branch migration. Branch migration allows RuvC to scan DNA until it finds its consensus sequence, where it cleaves and resolves cruciform DNA. The chain is Holliday junction branch migration complex subunit RuvB from Xanthomonas euvesicatoria pv. vesicatoria (strain 85-10) (Xanthomonas campestris pv. vesicatoria).